The sequence spans 750 residues: Photosystem I P700 chlorophyll a apoprotein A1 (750 aa).

8 consecutive transmembrane segments (helical) span residues Val70–Ala93, Leu156–His179, Leu195–Leu219, Ile291–Tyr309, Trp346–Tyr369, Leu385–Val411, Ala433–His455, and Phe531–Leu549. [4Fe-4S] cluster contacts are provided by Cys573 and Cys582. Transmembrane regions (helical) follow at residues His589–Trp610 and Leu664–Phe686. His675 contributes to the chlorophyll a' binding site. 2 residues coordinate chlorophyll a: Met683 and Tyr691. Trp692 is a binding site for phylloquinone. The helical transmembrane segment at Ala724 to Ala744 threads the bilayer.

Belongs to the PsaA/PsaB family. In terms of assembly, the PsaA/B heterodimer binds the P700 chlorophyll special pair and subsequent electron acceptors. PSI consists of a core antenna complex that captures photons, and an electron transfer chain that converts photonic excitation into a charge separation. The eukaryotic PSI reaction center is composed of at least 11 subunits. The cofactor is P700 is a chlorophyll a/chlorophyll a' dimer, A0 is one or more chlorophyll a, A1 is one or both phylloquinones and FX is a shared 4Fe-4S iron-sulfur center..

It localises to the plastid. The protein resides in the chloroplast thylakoid membrane. The enzyme catalyses reduced [plastocyanin] + hnu + oxidized [2Fe-2S]-[ferredoxin] = oxidized [plastocyanin] + reduced [2Fe-2S]-[ferredoxin]. In terms of biological role, psaA and PsaB bind P700, the primary electron donor of photosystem I (PSI), as well as the electron acceptors A0, A1 and FX. PSI is a plastocyanin-ferredoxin oxidoreductase, converting photonic excitation into a charge separation, which transfers an electron from the donor P700 chlorophyll pair to the spectroscopically characterized acceptors A0, A1, FX, FA and FB in turn. Oxidized P700 is reduced on the lumenal side of the thylakoid membrane by plastocyanin. The chain is Photosystem I P700 chlorophyll a apoprotein A1 from Phalaenopsis aphrodite subsp. formosana (Moth orchid).